Here is a 273-residue protein sequence, read N- to C-terminus: Proteasome subunit beta (273 aa).

Positions 1-50 (MRKDGARLALPLFDPRHDPGPDFAALVSRDAARTVPTSGDGSLGAQVPHG) are cleaved as a propeptide — removed in mature form; by autocatalysis. T51 (nucleophile) is an active-site residue.

The protein belongs to the peptidase T1B family. As to quaternary structure, the 20S proteasome core is composed of 14 alpha and 14 beta subunits that assemble into four stacked heptameric rings, resulting in a barrel-shaped structure. The two inner rings, each composed of seven catalytic beta subunits, are sandwiched by two outer rings, each composed of seven alpha subunits. The catalytic chamber with the active sites is on the inside of the barrel. Has a gated structure, the ends of the cylinder being occluded by the N-termini of the alpha-subunits. Is capped by the proteasome-associated ATPase, ARC.

The protein localises to the cytoplasm. It carries out the reaction Cleavage of peptide bonds with very broad specificity.. The protein operates within protein degradation; proteasomal Pup-dependent pathway. Its activity is regulated as follows. The formation of the proteasomal ATPase ARC-20S proteasome complex, likely via the docking of the C-termini of ARC into the intersubunit pockets in the alpha-rings, may trigger opening of the gate for substrate entry. Interconversion between the open-gate and close-gate conformations leads to a dynamic regulation of the 20S proteasome proteolysis activity. In terms of biological role, component of the proteasome core, a large protease complex with broad specificity involved in protein degradation. This chain is Proteasome subunit beta, found in Acidimicrobium ferrooxidans (strain DSM 10331 / JCM 15462 / NBRC 103882 / ICP).